Reading from the N-terminus, the 116-residue chain is Aspartate 1-decarboxylase (116 aa).

The active-site Schiff-base intermediate with substrate; via pyruvic acid is S25. Pyruvic acid (Ser) is present on S25. T57 serves as a coordination point for substrate. The Proton donor role is filled by Y58. 73-75 serves as a coordination point for substrate; it reads GAA.

It belongs to the PanD family. Heterooctamer of four alpha and four beta subunits. Pyruvate serves as cofactor. Is synthesized initially as an inactive proenzyme, which is activated by self-cleavage at a specific serine bond to produce a beta-subunit with a hydroxyl group at its C-terminus and an alpha-subunit with a pyruvoyl group at its N-terminus.

The protein resides in the cytoplasm. It catalyses the reaction L-aspartate + H(+) = beta-alanine + CO2. The protein operates within cofactor biosynthesis; (R)-pantothenate biosynthesis; beta-alanine from L-aspartate: step 1/1. Functionally, catalyzes the pyruvoyl-dependent decarboxylation of aspartate to produce beta-alanine. This Leptospira borgpetersenii serovar Hardjo-bovis (strain JB197) protein is Aspartate 1-decarboxylase.